The sequence spans 155 residues: Ribosomal RNA large subunit methyltransferase H (155 aa).

S-adenosyl-L-methionine is bound by residues L72, G103, and 122–127 (LSDLTL).

The protein belongs to the RNA methyltransferase RlmH family. In terms of assembly, homodimer.

Its subcellular location is the cytoplasm. It catalyses the reaction pseudouridine(1915) in 23S rRNA + S-adenosyl-L-methionine = N(3)-methylpseudouridine(1915) in 23S rRNA + S-adenosyl-L-homocysteine + H(+). Its function is as follows. Specifically methylates the pseudouridine at position 1915 (m3Psi1915) in 23S rRNA. This is Ribosomal RNA large subunit methyltransferase H from Verminephrobacter eiseniae (strain EF01-2).